Consider the following 1171-residue polypeptide: Phytochrome B (1171 aa).

Low complexity predominate over residues 1 to 19 (MASGSRATPTRSPSSARPA). The interval 1-53 (MASGSRATPTRSPSSARPAAPRHQHHHSQSSGGSTSRAGGGGGGGGGGGGGAA) is disordered. The span at 38-52 (AGGGGGGGGGGGGGA) shows a compositional bias: gly residues. Positions 259–442 (DVKLLCDTVV…AFGLQLNMEL (184 aa)) constitute a GAF domain. Cys364 contacts phytochromobilin. 2 PAS domains span residues 661–732 (VARE…LRGD) and 795–866 (DYKA…MIVL). In terms of domain architecture, Histidine kinase spans 943–1161 (YIYQEIKNPL…FFHIVLELPQ (219 aa)).

The protein belongs to the phytochrome family. In terms of assembly, homodimer. Contains one covalently linked phytochromobilin chromophore.

Functionally, regulatory photoreceptor which exists in two forms that are reversibly interconvertible by light: the Pr form that absorbs maximally in the red region of the spectrum and the Pfr form that absorbs maximally in the far-red region. Photoconversion of Pr to Pfr induces an array of morphogenic responses, whereas reconversion of Pfr to Pr cancels the induction of those responses. Pfr controls the expression of a number of nuclear genes including those encoding the small subunit of ribulose-bisphosphate carboxylase, chlorophyll A/B binding protein, protochlorophyllide reductase, rRNA, etc. It also controls the expression of its own gene(s) in a negative feedback fashion. This chain is Phytochrome B (PHYB), found in Oryza sativa subsp. japonica (Rice).